We begin with the raw amino-acid sequence, 139 residues long: Translation initiation factor 2 subunit beta (139 aa).

Belongs to the eIF-2-beta/eIF-5 family. In terms of assembly, heterotrimer composed of an alpha, a beta and a gamma chain.

Functionally, eIF-2 functions in the early steps of protein synthesis by forming a ternary complex with GTP and initiator tRNA. This is Translation initiation factor 2 subunit beta from Saccharolobus solfataricus (strain ATCC 35092 / DSM 1617 / JCM 11322 / P2) (Sulfolobus solfataricus).